The primary structure comprises 358 residues: Fructose-bisphosphate aldolase 2, cytoplasmic (358 aa).

Arg-39 serves as a coordination point for substrate. The active-site Proton acceptor is Glu-183. Lys-225 (schiff-base intermediate with dihydroxyacetone-P) is an active-site residue. Substrate-binding positions include 266–268 and Arg-298; that span reads SGG.

It belongs to the class I fructose-bisphosphate aldolase family. Homotetramer.

The protein localises to the cytoplasm. It localises to the cytosol. The catalysed reaction is beta-D-fructose 1,6-bisphosphate = D-glyceraldehyde 3-phosphate + dihydroxyacetone phosphate. It participates in carbohydrate degradation; glycolysis; D-glyceraldehyde 3-phosphate and glycerone phosphate from D-glucose: step 4/4. Functionally, fructose-bisphosphate aldolase that plays a key role in glycolysis and gluconeogenesis. This chain is Fructose-bisphosphate aldolase 2, cytoplasmic, found in Oryza sativa subsp. japonica (Rice).